The primary structure comprises 348 residues: ECA polysaccharide chain length modulation protein (348 aa).

Transmembrane regions (helical) follow at residues 31-51 (FWII…TFFA) and 323-343 (AFLM…VALT).

It belongs to the WzzB/Cld/Rol family. As to quaternary structure, probably part of a complex composed of WzxE, WzyE and WzzE.

Its subcellular location is the cell inner membrane. The protein operates within bacterial outer membrane biogenesis; enterobacterial common antigen biosynthesis. Modulates the polysaccharide chain length of enterobacterial common antigen (ECA). The chain is ECA polysaccharide chain length modulation protein from Salmonella typhimurium (strain LT2 / SGSC1412 / ATCC 700720).